We begin with the raw amino-acid sequence, 717 residues long: MKEFFATCPKGLENLLAVELTNLGAEQVRETVAGVHFKGELAIGYKACLWSRFASRIVLVLSEFQMNDDLDLYLGAHTIPWEEHFSGTSTIAVDFTGTNPAIRNTQYGALKIKDAIVDRFTKRGHVRPDVDKKSPDIRIMAHLGKGKANITLDLSGPALHQRFYRQGTGEAPLKENLAAAMIARSGWAGEPMMDPMCGSGTLLVEAAFIAADMAPALRRERFGFDRWLQHDSELWQSLLMEAQVRAKRGMQRCEVKLFGCDADSRVLLKARDNAKAAGVAHLITFKQADVTALENPLPMPAPVEGEEGQGEARQVGMLISNPPYGERLGEFPALLEVHQALGDALRRSFQGWKVSILSASPELLSCLRLRADKQYRLFNGALECQLRNYQIAQDSVASQKEVAQDFANRLRKNLKTLEKWAQKENLDCYRLYDADLPEYNAAIDRYQDYLVVQEYAAPKDIPAQKTRQRLLDMVQAAIKVTGMDGEKVILKVRERQEGKQQYQKLSEEQHRMEVQEYGARLWVNLYDYLDTGLFLDHRQTRRMLGQMAKGKRFLNLFAYTGSATVHAGLGGASETTTVDMSRTYLNWAQDNMRLNSLVGREHKFVQADCLKWLSEADDQYDLIFIDPPTFSNSKRMDESFDVQRDHLLLMQHLKRLLAAGGTLVFSNNKRHFKMDLAGLEAIGLKAQNITGKTRPKDFERNQHIHNCWIITHAEAQA.

One can recognise a THUMP domain in the interval 43-154 (IGYKACLWSR…KGKANITLDL (112 aa)).

The protein belongs to the methyltransferase superfamily. RlmKL family.

It localises to the cytoplasm. It carries out the reaction guanosine(2445) in 23S rRNA + S-adenosyl-L-methionine = N(2)-methylguanosine(2445) in 23S rRNA + S-adenosyl-L-homocysteine + H(+). The enzyme catalyses guanosine(2069) in 23S rRNA + S-adenosyl-L-methionine = N(2)-methylguanosine(2069) in 23S rRNA + S-adenosyl-L-homocysteine + H(+). Specifically methylates the guanine in position 2445 (m2G2445) and the guanine in position 2069 (m7G2069) of 23S rRNA. The polypeptide is Ribosomal RNA large subunit methyltransferase K/L (Aeromonas hydrophila subsp. hydrophila (strain ATCC 7966 / DSM 30187 / BCRC 13018 / CCUG 14551 / JCM 1027 / KCTC 2358 / NCIMB 9240 / NCTC 8049)).